Reading from the N-terminus, the 286-residue chain is MANAKEIKTKIASVQNTQKITSAMEMVAASKMRKAQDRMASSRPYAENMRKVIGHVAQGSLEYKHPYLEVREAKRVGYIVVSTDRGLCGGLNVNLFKKVVADVKKQREAGAEVEFCPIGARSVQFFNSFGGQVSAHASGLGDAPKLADLIGTVRVMLQAYNEGKLDRLYVVFNKFVNTMSQTPVIEQLLPLPKSEEDEISHHWDYLYEPDPKELLDTLLVRYVESQVYQGVVENIASEQAARMVAMKAATDNAGELISDLELVYNKARQAAITQELSEIVSGAAAV.

It belongs to the ATPase gamma chain family. As to quaternary structure, F-type ATPases have 2 components, CF(1) - the catalytic core - and CF(0) - the membrane proton channel. CF(1) has five subunits: alpha(3), beta(3), gamma(1), delta(1), epsilon(1). CF(0) has three main subunits: a, b and c.

The protein resides in the cell inner membrane. Its function is as follows. Produces ATP from ADP in the presence of a proton gradient across the membrane. The gamma chain is believed to be important in regulating ATPase activity and the flow of protons through the CF(0) complex. The protein is ATP synthase gamma chain of Shewanella woodyi (strain ATCC 51908 / MS32).